A 296-amino-acid polypeptide reads, in one-letter code: Ribosomal RNA small subunit methyltransferase A (296 aa).

S-adenosyl-L-methionine is bound by residues N30, L32, G57, E78, D103, and N128.

Belongs to the class I-like SAM-binding methyltransferase superfamily. rRNA adenine N(6)-methyltransferase family. RsmA subfamily.

It localises to the cytoplasm. The enzyme catalyses adenosine(1518)/adenosine(1519) in 16S rRNA + 4 S-adenosyl-L-methionine = N(6)-dimethyladenosine(1518)/N(6)-dimethyladenosine(1519) in 16S rRNA + 4 S-adenosyl-L-homocysteine + 4 H(+). In terms of biological role, specifically dimethylates two adjacent adenosines (A1518 and A1519) in the loop of a conserved hairpin near the 3'-end of 16S rRNA in the 30S particle. May play a critical role in biogenesis of 30S subunits. The polypeptide is Ribosomal RNA small subunit methyltransferase A (Staphylococcus epidermidis (strain ATCC 35984 / DSM 28319 / BCRC 17069 / CCUG 31568 / BM 3577 / RP62A)).